The following is a 189-amino-acid chain: Interferon alpha-1 (189 aa).

A signal peptide spans methionine 1–glycine 23. Cystine bridges form between cysteine 24–cysteine 122 and cysteine 52–cysteine 162.

It belongs to the alpha/beta interferon family. As to quaternary structure, interacts with CR2.

The protein resides in the secreted. Functionally, produced by macrophages, IFN-alpha have antiviral activities. Interferon stimulates the production of two enzymes: a protein kinase and an oligoadenylate synthetase. This is Interferon alpha-1 from Bos taurus (Bovine).